A 159-amino-acid chain; its full sequence is RNA pyrophosphohydrolase (159 aa).

Positions 6 to 149 constitute a Nudix hydrolase domain; the sequence is GFRPNVGIIL…KREVYRRALK (144 aa). A Nudix box motif is present at residues 38 to 59; it reads GGINPDETPEDALYRELNEEVG.

Belongs to the Nudix hydrolase family. RppH subfamily. The cofactor is a divalent metal cation.

Its function is as follows. Accelerates the degradation of transcripts by removing pyrophosphate from the 5'-end of triphosphorylated RNA, leading to a more labile monophosphorylated state that can stimulate subsequent ribonuclease cleavage. This is RNA pyrophosphohydrolase from Pseudomonas entomophila (strain L48).